The chain runs to 123 residues: Transmembrane protein 049L (123 aa).

2 helical membrane-spanning segments follow: residues 67 to 87 (VFGA…LWLV) and 104 to 121 (LSLQ…GVYN).

The protein localises to the membrane. The protein is Transmembrane protein 049L of Acheta domesticus (House cricket).